The sequence spans 20 residues: Unknown protein NF003 from 2D-PAGE (20 aa).

The chain is Unknown protein NF003 from 2D-PAGE from Naegleria fowleri (Brain eating amoeba).